A 78-amino-acid polypeptide reads, in one-letter code: Small ribosomal subunit protein bS16 (78 aa).

Belongs to the bacterial ribosomal protein bS16 family.

In Thermodesulfovibrio yellowstonii (strain ATCC 51303 / DSM 11347 / YP87), this protein is Small ribosomal subunit protein bS16.